We begin with the raw amino-acid sequence, 287 residues long: Anthocyanidin 3-O-glucosyltransferase 7 (287 aa).

UDP-alpha-D-glucose contacts are provided by Ala162, Gln164, His179, Trp182, Asn183, Ser184, and Glu187. Position 202 (Gly202) interacts with an anthocyanidin. UDP-alpha-D-glucose contacts are provided by Asp203 and Gln204.

It belongs to the UDP-glycosyltransferase family. As to expression, expressed in cotyledons, hypocotyls, roots and leaves.

It catalyses the reaction an anthocyanidin + UDP-alpha-D-glucose + H(+) = an anthocyanidin 3-O-beta-D-glucoside + UDP. The protein operates within pigment biosynthesis; anthocyanin biosynthesis. Its function is as follows. In the presence of other necessary color factors, this glycosylation reaction allows the accumulation of anthocyanin pigments. The chain is Anthocyanidin 3-O-glucosyltransferase 7 (GT7) from Manihot esculenta (Cassava).